A 763-amino-acid polypeptide reads, in one-letter code: Phosphoglycerol transferase I (763 aa).

4 helical membrane-spanning segments follow: residues 1-21, 26-46, 77-97, and 108-128; these read MSEL…AWKA, WWFA…ITLF, ILPG…LGWI, and FGYS…SPAF.

The protein belongs to the OpgB family.

It localises to the cell inner membrane. The catalysed reaction is a phosphatidylglycerol + a membrane-derived-oligosaccharide D-glucose = a 1,2-diacyl-sn-glycerol + a membrane-derived-oligosaccharide 6-(glycerophospho)-D-glucose.. The protein operates within glycan metabolism; osmoregulated periplasmic glucan (OPG) biosynthesis. Its function is as follows. Transfers a phosphoglycerol residue from phosphatidylglycerol to the membrane-bound nascent glucan backbones. This is Phosphoglycerol transferase I from Escherichia coli (strain UTI89 / UPEC).